An 840-amino-acid chain; its full sequence is Mechanosensitive ion channel protein Msy2 (840 aa).

Over Met-1–Arg-68 the chain is Cytoplasmic. A helical membrane pass occupies residues Trp-69–Ser-89. Topologically, residues Pro-90–Arg-100 are lumenal. The helical transmembrane segment at Ile-101 to Ile-121 threads the bilayer. Residues Ala-122–Pro-126 are Cytoplasmic-facing. Residues Tyr-127–Leu-147 form a helical membrane-spanning segment. The Lumenal segment spans residues Thr-148–Glu-151. Residues Met-152–Ile-172 traverse the membrane as a helical segment. The Cytoplasmic portion of the chain corresponds to Gly-173–Gly-225. Residues Ala-226–Phe-246 form a helical membrane-spanning segment. Topologically, residues His-247–Gly-449 are lumenal. In terms of domain architecture, EF-hand spans Ile-392–Glu-427. A helical membrane pass occupies residues Leu-450–Ala-491. The Cytoplasmic portion of the chain corresponds to Gln-492–Tyr-840. 2 disordered regions span residues Glu-677 to Asp-730 and Glu-775 to Ala-819. A compositionally biased stretch (low complexity) spans Ser-688 to Ser-700. The span at Ser-708–Asp-730 shows a compositional bias: basic and acidic residues. Positions Ser-776–Ala-819 are enriched in low complexity.

Belongs to the MscS (TC 1.A.23) family.

The protein resides in the endoplasmic reticulum membrane. Functionally, regulates intracellular calcium levels and cell volume for survival in response to hypo-osmotic shock. Involved in maintaining vacuole integrity and protecting the nuclear envelope upon hypo-osmotic shock. The protein is Mechanosensitive ion channel protein Msy2 of Schizosaccharomyces pombe (strain 972 / ATCC 24843) (Fission yeast).